The sequence spans 157 residues: Globin (157 aa).

Position 1 is an N-acetylglycine (Gly-1). Residues Ser-8–Lys-155 form the Globin domain. Residues His-70 and His-102 each contribute to the heme b site.

This sequence belongs to the globin family. As to quaternary structure, monomer.

The protein is Globin of Nerita albicilla (Ox-palate nerite).